Here is a 563-residue protein sequence, read N- to C-terminus: Nigrin b (563 aa).

The signal sequence occupies residues 1 to 25; it reads MRVVAAAMLYFYIVVLAICSVGIQG. Glutamate 188 is a catalytic residue. N-linked (GlcNAc...) asparagine glycosylation occurs at asparagine 221. Cystine bridges form between cysteine 274–cysteine 302, cysteine 319–cysteine 338, and cysteine 360–cysteine 377. 2 consecutive Ricin B-type lectin domains span residues 305 to 431 and 434 to 559; these read RTSF…WTVT and VKPI…WVTQ. A 1-alpha repeat occupies 316–356; the sequence is DGLCVDVRNGYDTDGTPLQLWPCGTQRNQRWTFDSDDTIRS. Residues 357 to 397 form a 1-beta repeat; that stretch reads MGKCMTANGLNNGSNIVIFNCSTAAENAIKWEVPIDGSIIN. Residues asparagine 368 and asparagine 376 are each glycosylated (N-linked (GlcNAc...) asparagine). The 1-gamma repeat unit spans residues 400 to 432; it reads SGLVMTAPRAASRTILLLEDNIYAASQGWTVTN. A 2-alpha repeat occupies 445-482; it reads KEMCLQSNGENNGVWMEDCEATSLQQQWALYGDRTIRV. Cysteines 448 and 463 form a disulfide. Residue asparagine 483 is glycosylated (N-linked (GlcNAc...) asparagine). One copy of the 2-beta repeat lies at 486 to 524; it reads RGLCVTTNGYNSKDLIIILKCQGLPSQRWFFNSDGAIVN. Cysteine 489 and cysteine 506 are disulfide-bonded. A 2-gamma repeat occupies 527–554; it reads SRHVMDVRASNVSLREIIIFPATGNPNQ. The N-linked (GlcNAc...) asparagine glycan is linked to asparagine 537.

This sequence in the N-terminal section; belongs to the ribosome-inactivating protein family. Type 2 RIP subfamily. As to quaternary structure, disulfide-linked dimer of A and B chains.

It carries out the reaction Endohydrolysis of the N-glycosidic bond at one specific adenosine on the 28S rRNA.. Non-toxic type 2 RIP which strongly inhibits mammalian protein synthesis but does not affect plant nor bacterial protein synthesis. The A chain is responsible for inhibiting protein synthesis through the catalytic inactivation of 60S ribosomal subunits by removing adenine from position 4,324 of 28S rRNA. In terms of biological role, the B chain is a galactose-specific lectin that facilitates the binding of nigrin b to the cell membrane that precedes endocytosis. The chain is Nigrin b from Sambucus nigra (European elder).